We begin with the raw amino-acid sequence, 389 residues long: Chalcone synthase 6 (389 aa).

C164 is a catalytic residue.

It belongs to the thiolase-like superfamily. Chalcone/stilbene synthases family.

It catalyses the reaction (E)-4-coumaroyl-CoA + 3 malonyl-CoA + 3 H(+) = 2',4,4',6'-tetrahydroxychalcone + 3 CO2 + 4 CoA. It participates in secondary metabolite biosynthesis; flavonoid biosynthesis. In terms of biological role, the primary product of this enzyme is 4,2',4',6'-tetrahydroxychalcone (also termed naringenin-chalcone or chalcone) which can under specific conditions spontaneously isomerize into naringenin. The sequence is that of Chalcone synthase 6 (CHS6) from Trifolium subterraneum (Subterranean clover).